A 182-amino-acid chain; its full sequence is MFPMITGFMNYGQQTVRAARYIGQSFMITLSHTNRLPVTIQYPYEKLLTSERFRGRIHFEFDKCIACEVCVRVCPIDLPVVDWKLETYIRKKRLLNYSIDFGICIFCGNCVEYCPTNCLSMTEEYELSTYDRHELNYNQIALGRLPMSAIGDYTIRTIMNSPQTKIKTSMDKPFDSRTITNH.

4Fe-4S ferredoxin-type domains follow at residues 55–84 (GRIH…VDWK) and 95–124 (LNYS…MTEE). Positions 64, 67, 70, 74, 104, 107, 110, and 114 each coordinate [4Fe-4S] cluster.

The protein belongs to the complex I 23 kDa subunit family. In terms of assembly, NDH is composed of at least 16 different subunits, 5 of which are encoded in the nucleus. [4Fe-4S] cluster is required as a cofactor.

The protein localises to the plastid. It localises to the chloroplast thylakoid membrane. The enzyme catalyses a plastoquinone + NADH + (n+1) H(+)(in) = a plastoquinol + NAD(+) + n H(+)(out). It catalyses the reaction a plastoquinone + NADPH + (n+1) H(+)(in) = a plastoquinol + NADP(+) + n H(+)(out). Its function is as follows. NDH shuttles electrons from NAD(P)H:plastoquinone, via FMN and iron-sulfur (Fe-S) centers, to quinones in the photosynthetic chain and possibly in a chloroplast respiratory chain. The immediate electron acceptor for the enzyme in this species is believed to be plastoquinone. Couples the redox reaction to proton translocation, and thus conserves the redox energy in a proton gradient. This chain is NAD(P)H-quinone oxidoreductase subunit I, chloroplastic, found in Buxus microphylla (Littleleaf boxwood).